A 3739-amino-acid chain; its full sequence is Pikromycin polyketide synthase component PikAII (3739 aa).

The region spanning 35-463 (GEPVAIVGMA…GTNAHVVLEE (429 aa)) is the Ketosynthase family 3 (KS3) 1 domain. Module regions lie at residues 38–1517 (VAIV…EFLL) and 1542–3642 (VAIV…GHLL). The active-site Acyl-thioester intermediate; for beta-ketoacyl synthase 1 activity is the C208. Residues H343 and H383 each act as for beta-ketoacyl synthase 1 activity in the active site. Residues 572–877 (FVFPGQGTQW…ERLVTSLAEA (306 aa)) are acyltransferase 1. S662 (acyl-ester intermediate; for acyltransferase 1 activity) is an active-site residue. Residues 1150-1343 (GTVLVTGAEE…VTSVAWSPWE (194 aa)) form a C2-type beta-ketoacyl reductase 1 region. Y1313 (for C2-type beta-ketoacyl reductase 1 and probable racemase activities) is an active-site residue. Residues 1445–1520 (RRMQELVREH…TLAEFLLAEI (76 aa)) form the Carrier 1 domain. An O-(pantetheine 4'-phosphoryl)serine modification is found at S1480. The 429-residue stretch at 1539–1967 (DEPVAIVGMA…GTNAHIVLEE (429 aa)) folds into the Ketosynthase family 3 (KS3) 2 domain. C1712 functions as the Acyl-thioester intermediate; for beta-ketoacyl synthase 2 activity in the catalytic mechanism. Active-site for beta-ketoacyl synthase 2 activity residues include H1847 and H1887. An acyltransferase 2 region spans residues 2069 to 2374 (FVFPGQGTQW…HRLTTSLAEA (306 aa)). The active-site Acyl-ester intermediate; for acyltransferase 2 activity is the S2159. Positions 2428–2553 (HPLLGAAVAL…GVLAARADRT (126 aa)) are N-terminal hotdog fold. A dehydratase region spans residues 2428–2703 (HPLLGAAVAL…LTVLPVDPAQ (276 aa)). One can recognise a PKS/mFAS DH domain in the interval 2428 to 2705 (HPLLGAAVAL…VLPVDPAQLA (278 aa)). H2460 (proton acceptor; for dehydratase activity) is an active-site residue. The tract at residues 2567-2705 (AEPVDVDGLY…VLPVDPAQLA (139 aa)) is C-terminal hotdog fold. The Proton donor; for dehydratase activity role is filled by D2629. Positions 2959–3267 (GSLESLTAAP…QARHTGKVVL (309 aa)) are enoyl reductase. Residue Y3005 is the For enoyl reductase activity of the active site. NADP(+) contacts are provided by residues 3092–3109 (LLVH…VQLA), 3285–3288 (TGAL), 3309–3312 (SRRG), 3338–3339 (DV), K3388, and 3412–3413 (FS). The tract at residues 3277–3458 (GTVLLTGGTG…LSLGWGLWAE (182 aa)) is beta-ketoacyl reductase 2. The For beta-ketoacyl reductase 2 activity role is filled by Y3427. The region spanning 3570-3645 (AHLRDLVRTH…ELAGHLLDEL (76 aa)) is the Carrier 2 domain. Residue S3605 is modified to O-(pantetheine 4'-phosphoryl)serine.

Homodimer. Pikromycin PKS consists of a combination of multimodular (PikAI and PikAII) and monomodular (PikAIII and PikAIV) polypeptides each coding for a functional synthase subunit which participates in 1 (monomodular) or 2 (multimodular) of the six FAS-like elongation steps required for formation of the polyketide. Module 1, 2, 3, 4, 5, and 6 participating in biosynthesis steps 1, 2, 3, 4, 5, and 6, respectively. It depends on pantetheine 4'-phosphate as a cofactor.

The enzyme catalyses 5 (S)-methylmalonyl-CoA + malonyl-CoA + 5 NADPH + 11 H(+) = 10-deoxymethynolide + 6 CO2 + 5 NADP(+) + 6 CoA + 2 H2O. It catalyses the reaction 6 (S)-methylmalonyl-CoA + malonyl-CoA + 5 NADPH + 12 H(+) = narbonolide + 7 CO2 + 5 NADP(+) + 7 CoA + 2 H2O. The protein operates within antibiotic biosynthesis. Its function is as follows. Involved in the biosynthesis of 12- and 14-membered ring macrolactone antibiotics such as methymycin/neomethymycin and pikromycin/narbomycin, respectively. Component of the pikromycin PKS which catalyzes the biosynthesis of both precursors 10-deoxymethynolide (12-membered ring macrolactone) and narbonolide (14-membered ring macrolactone). Chain elongation through PikAI, PikAII and PikAIII followed by thioesterase catalyzed termination results in the production of 10-deoxymethynolide, while continued elongation through PikAIV, followed by thioesterase (TE) catalyzed cyclization results in the biosynthesis of the narbonolide. The protein is Pikromycin polyketide synthase component PikAII of Streptomyces venezuelae.